The primary structure comprises 771 residues: MADDGLLLNFAIPDTTVLRPEKTKVKGGTWRDRLSAKKIAAHRTNNPRKEKSASNGEQNSNPRNPNRIQVSGPRPVKRQRIEDDDGNGGSQPRQQQQQHPGAPRQFVSSLFSKNPRPRNAVEEKNEAGAEVEDAKPTNAPLIDGLDTFTNLGLSAPLAAHLLTKLEVKAPTAIQKASITQLLKEESDAFIQAETGSGKTMAYLLPLVQRIMTISLNQKKREEGEQVQRDSGLFAIVLAPTRELCKQIAVVLEGLLRCAHWIVAGTVIGGEKKKSEKARLRKGLNILVATPGRLADHLENTQALDVSNVRWLVLDEGDRLMELGFEKELAGIIQKLDARQRPSRIPGIPAKRTTILCSATLKMTVQKLGEISLKDAVHIQADPADEDGEPRKKDEDDAFRVPAQLKQSYAIVASKLRLVTLTAFMKRTFMRKGSVMKAIIFVSCADSVDFHFEVFTRKNGDEEEKKEESEDSDEEDAEEKRKKLGASAHGTIAPATAFSNPSNPVALHRLHGSLPQHVRTATLGAFARNREPSVLICTDVASRGLDLPNVDLVVEYDPAFSAEDHLHRIGRTARLGRDGRALIFLMPGCEEGYVDILKKGYRDGGKALTRNSADDILKRGFGGNVESQNVDWEEKATEWQLDVERWALENKNYLEMARRAYQSHIRAYATHIANERSMFNIKELHLGHLAKSFALRDRPSKINVPGLRQAQADTKKDFKADRKPVAGKKRKAGGHDDDDDDVPRQTDTLTAAQKMRAKMKEHMAGASEFNLA.

A compositionally biased stretch (basic and acidic residues) spans 23-35 (TKVKGGTWRDRLS). The disordered stretch occupies residues 23–139 (TKVKGGTWRD…EVEDAKPTNA (117 aa)). Polar residues predominate over residues 53–69 (ASNGEQNSNPRNPNRIQ). A compositionally biased stretch (low complexity) spans 90 to 105 (SQPRQQQQQHPGAPRQ). Positions 119-135 (NAVEEKNEAGAEVEDAK) are enriched in basic and acidic residues. The Q motif motif lies at 146 to 175 (DTFTNLGLSAPLAAHLLTKLEVKAPTAIQK). One can recognise a Helicase ATP-binding domain in the interval 179–378 (TQLLKEESDA…EISLKDAVHI (200 aa)). 192–199 (AETGSGKT) lines the ATP pocket. A DEAD box motif is present at residues 314–317 (DEGD). Positions 403–615 (QLKQSYAIVA…ALTRNSADDI (213 aa)) constitute a Helicase C-terminal domain. Disordered regions lie at residues 458-485 (NGDE…KLGA) and 703-771 (VPGL…FNLA). The segment covering 460–476 (DEEEKKEESEDSDEEDA) has biased composition (acidic residues). Residues 712 to 723 (DTKKDFKADRKP) are compositionally biased toward basic and acidic residues.

The protein belongs to the DEAD box helicase family. DDX31/DBP7 subfamily.

The protein resides in the nucleus. The protein localises to the nucleolus. It carries out the reaction ATP + H2O = ADP + phosphate + H(+). Functionally, ATP-binding RNA helicase involved in the biogenesis of 60S ribosomal subunits and is required for the normal formation of 25S and 5.8S rRNAs. This Aspergillus niger (strain ATCC MYA-4892 / CBS 513.88 / FGSC A1513) protein is ATP-dependent RNA helicase dbp7 (dbp7).